Here is a 622-residue protein sequence, read N- to C-terminus: 1-deoxy-D-xylulose-5-phosphate synthase (622 aa).

Thiamine diphosphate-binding positions include H80 and 121 to 123; that span reads GHS. Mg(2+) is bound at residue D152. Thiamine diphosphate-binding positions include 153–154, N181, Y288, and E370; that span reads GA. N181 provides a ligand contact to Mg(2+).

The protein belongs to the transketolase family. DXPS subfamily. In terms of assembly, homodimer. Requires Mg(2+) as cofactor. It depends on thiamine diphosphate as a cofactor.

The enzyme catalyses D-glyceraldehyde 3-phosphate + pyruvate + H(+) = 1-deoxy-D-xylulose 5-phosphate + CO2. It participates in metabolic intermediate biosynthesis; 1-deoxy-D-xylulose 5-phosphate biosynthesis; 1-deoxy-D-xylulose 5-phosphate from D-glyceraldehyde 3-phosphate and pyruvate: step 1/1. Functionally, catalyzes the acyloin condensation reaction between C atoms 2 and 3 of pyruvate and glyceraldehyde 3-phosphate to yield 1-deoxy-D-xylulose-5-phosphate (DXP). The sequence is that of 1-deoxy-D-xylulose-5-phosphate synthase from Shewanella denitrificans (strain OS217 / ATCC BAA-1090 / DSM 15013).